Here is a 164-residue protein sequence, read N- to C-terminus: Protein-export protein SecB (164 aa).

It belongs to the SecB family. Homotetramer, a dimer of dimers. One homotetramer interacts with 1 SecA dimer.

Its subcellular location is the cytoplasm. Functionally, one of the proteins required for the normal export of preproteins out of the cell cytoplasm. It is a molecular chaperone that binds to a subset of precursor proteins, maintaining them in a translocation-competent state. It also specifically binds to its receptor SecA. This chain is Protein-export protein SecB, found in Chromohalobacter salexigens (strain ATCC BAA-138 / DSM 3043 / CIP 106854 / NCIMB 13768 / 1H11).